An 883-amino-acid polypeptide reads, in one-letter code: Phosphoenolpyruvate carboxylase (883 aa).

Residues histidine 141 and lysine 547 contribute to the active site.

The protein belongs to the PEPCase type 1 family. Mg(2+) is required as a cofactor.

It catalyses the reaction oxaloacetate + phosphate = phosphoenolpyruvate + hydrogencarbonate. In terms of biological role, forms oxaloacetate, a four-carbon dicarboxylic acid source for the tricarboxylic acid cycle. The sequence is that of Phosphoenolpyruvate carboxylase from Chromohalobacter salexigens (strain ATCC BAA-138 / DSM 3043 / CIP 106854 / NCIMB 13768 / 1H11).